Here is a 302-residue protein sequence, read N- to C-terminus: uncharacterized protein (302 aa).

A signal peptide spans 1–22 (MLVVFKRLGFIVSIFSLTFLSA). The N-palmitoyl cysteine moiety is linked to residue Cys23. The S-diacylglycerol cysteine moiety is linked to residue Cys23.

The protein belongs to the MG067/MG068/MG395 family.

Its subcellular location is the cell membrane. This is an uncharacterized protein from Mycoplasma pneumoniae (strain ATCC 29342 / M129 / Subtype 1) (Mycoplasmoides pneumoniae).